The chain runs to 394 residues: Xylose isomerase (394 aa).

Residues His54 and Asp57 contribute to the active site. The Mg(2+) site is built by Glu180, Glu216, His219, Asp244, Asp254, Asp256, and Asp285. The segment at 370–394 (VRTPRPAGDGPPAGRARLTVAPRKR) is disordered. A compositionally biased stretch (low complexity) spans 373-386 (PRPAGDGPPAGRAR).

The protein belongs to the xylose isomerase family. As to quaternary structure, homotetramer. The cofactor is Mg(2+).

The protein localises to the cytoplasm. It carries out the reaction alpha-D-xylose = alpha-D-xylulofuranose. Its function is as follows. Involved in D-xylose catabolism. The polypeptide is Xylose isomerase (xylA) (Streptomyces rochei (Streptomyces parvullus)).